Here is an 820-residue protein sequence, read N- to C-terminus: Protein O-mannosyl-transferase 2 (820 aa).

Residues A124–H144 form a helical membrane-spanning segment. The N-linked (GlcNAc...) asparagine glycan is linked to N168. 5 helical membrane passes run T170–L190, G216–L236, Q261–V281, L301–V321, and I353–M373. N-linked (GlcNAc...) asparagine glycans are attached at residues N376 and N400. 3 consecutive MIR domains span residues P404 to Y460, V473 to V529, and G534 to H591. Residue N515 is glycosylated (N-linked (GlcNAc...) asparagine). Residues N598 and N653 are each glycosylated (N-linked (GlcNAc...) asparagine). A run of 4 helical transmembrane segments spans residues V659–L679, L713–F733, H735–L755, and V774–A794.

This sequence belongs to the glycosyltransferase 39 family. N-glycosylated. Ubiquitous. Highly expressed in the acrosome of cap phase spermatids, in spermatocytes and liver. Isoform 1 seems to be testis-specific.

It is found in the endoplasmic reticulum membrane. The catalysed reaction is a di-trans,poly-cis-dolichyl beta-D-mannosyl phosphate + L-seryl-[protein] = 3-O-(alpha-D-mannosyl)-L-seryl-[protein] + a di-trans,poly-cis-dolichyl phosphate + H(+). The enzyme catalyses a di-trans,poly-cis-dolichyl beta-D-mannosyl phosphate + L-threonyl-[protein] = 3-O-(alpha-D-mannosyl)-L-threonyl-[protein] + a di-trans,poly-cis-dolichyl phosphate + H(+). It functions in the pathway protein modification; protein glycosylation. Transfers mannosyl residues to the hydroxyl group of serine or threonine residues. Coexpression of both POMT1 and POMT2 is necessary for enzyme activity, expression of either POMT1 or POMT2 alone is insufficient. Essentially dedicated to O-mannosylation of alpha-DAG1 and few other proteins but not of cadherins and protocaherins. The sequence is that of Protein O-mannosyl-transferase 2 (Pomt2) from Mus musculus (Mouse).